We begin with the raw amino-acid sequence, 332 residues long: MAIPEFTMRQLLEAGVHFGHQSHRWNPKMAEYIFGARNNIHIIDLAQTVPLLHHALQAVSDTVARGGRILFVGTKRQAQDGVADAAKRSAQYFVNSRWLGGTLTNWKTISGSIKRLRHLDEVLNSGDANAYTKKERLTLQRERDKLDRSLGGIKDMGGLPDLMFVIDTNKEDIAIQEAQRLNIPVAAIVDTNCDPKGITYIVPGNDDAGRAISLYCDLIARAAIDGISRAQGESGIDVGASVQPVQEEIPAAAQPAGFQGLAGPRGVADDLKKLTGVSGAIEKKFNDLGIFHYWQLAELDHDTAHRIGEEVGLPSRADGWVAQAKAMTAEAE.

It belongs to the universal ribosomal protein uS2 family.

The sequence is that of Small ribosomal subunit protein uS2 from Nitrobacter winogradskyi (strain ATCC 25391 / DSM 10237 / CIP 104748 / NCIMB 11846 / Nb-255).